The sequence spans 568 residues: N66 matrix protein (568 aa).

An N-terminal signal peptide occupies residues 1–22 (MWRMTTLLHLTALLVLIPLCHC). The Alpha-carbonic anhydrase domain maps to 55 to 567 (AGFSYNRDIC…KHPLRVYKNS (513 aa)). Positions 154, 156, and 179 each coordinate Zn(2+). The interval 259–421 (NGNNGNNGNG…NGYNGDNGNS (163 aa)) is disordered. The span at 280 to 290 (GNNGNGNGNNG) shows a compositional bias: gly residues. A compositionally biased stretch (low complexity) spans 291–318 (YNGNNGYNGNNGNNGNGNNDNNGNDNNG). Gly residues-rich tracts occupy residues 319-352 (NNGG…GNNG) and 362-380 (NGNG…GNNG). Asn389 is a glycosylation site (N-linked (GlcNAc...) asparagine). Over residues 390–413 (GSNGNNGGNGNNGNNGDNGNGDNG) the composition is skewed to gly residues. 506–507 (TT) provides a ligand contact to substrate. A glycan (N-linked (GlcNAc...) asparagine) is linked at Asn511.

The protein belongs to the alpha-carbonic anhydrase family. As to quaternary structure, homooligomer; disulfide-linked. May also be disulfide-linked to insoluble organic matrix. Zn(2+) is required as a cofactor. In terms of tissue distribution, expressed in both the dorsal region of the mantle and the mantle edge. Is dispersed in calcium carbonate and also linked by disulfide bonds to the organic core of nacre.

It localises to the secreted. The protein localises to the extracellular space. Its subcellular location is the extracellular matrix. It carries out the reaction hydrogencarbonate + H(+) = CO2 + H2O. Its function is as follows. Acts as a negative regulator for calcification in the shells of mollusks. May function both as a calcium concentrator and as a carbonic anhydrase required for production of carbonate ions, which are assembled to CaCO(3) at mineralization sites. Is important for shell formation in both the calcitic prismatic layer and the aragonitic nacreous layer. The sequence is that of N66 matrix protein from Pinctada maxima (Silver-lipped pearl oyster).